Here is a 193-residue protein sequence, read N- to C-terminus: Holliday junction branch migration complex subunit RuvA (193 aa).

The domain I stretch occupies residues 1 to 64 (MIGRIAGTLL…EDAHLLYGFL (64 aa)). The domain II stretch occupies residues 65 to 139 (TPPERSTFRE…GKLGADLGPL (75 aa)). Positions 139 to 143 (LAGAA) are flexible linker. The segment at 144–193 (SPSDHATDILNALVALGYSEKEALAAIKNVPAGTGVSEGIKLSLKALSKA) is domain III.

This sequence belongs to the RuvA family. In terms of assembly, homotetramer. Forms an RuvA(8)-RuvB(12)-Holliday junction (HJ) complex. HJ DNA is sandwiched between 2 RuvA tetramers; dsDNA enters through RuvA and exits via RuvB. An RuvB hexamer assembles on each DNA strand where it exits the tetramer. Each RuvB hexamer is contacted by two RuvA subunits (via domain III) on 2 adjacent RuvB subunits; this complex drives branch migration. In the full resolvosome a probable DNA-RuvA(4)-RuvB(12)-RuvC(2) complex forms which resolves the HJ.

It localises to the cytoplasm. Functionally, the RuvA-RuvB-RuvC complex processes Holliday junction (HJ) DNA during genetic recombination and DNA repair, while the RuvA-RuvB complex plays an important role in the rescue of blocked DNA replication forks via replication fork reversal (RFR). RuvA specifically binds to HJ cruciform DNA, conferring on it an open structure. The RuvB hexamer acts as an ATP-dependent pump, pulling dsDNA into and through the RuvAB complex. HJ branch migration allows RuvC to scan DNA until it finds its consensus sequence, where it cleaves and resolves the cruciform DNA. This chain is Holliday junction branch migration complex subunit RuvA, found in Burkholderia mallei (strain NCTC 10229).